The sequence spans 325 residues: Diadenosine 5',5'''-P1,P4-tetraphosphate phosphorylase 2 (325 aa).

Residues Lys-53, 92 to 93 (NK), Asn-148, and 154 to 157 (GSSQ) each bind substrate. The active-site Nucleophile is His-161. Residues Gln-163, 277–279 (NST), Met-284, and Lys-288 each bind substrate.

It belongs to the ATP adenylyltransferase family. As to quaternary structure, monomer. A divalent metal cation serves as cofactor.

It is found in the cytoplasm. It localises to the nucleus. The catalysed reaction is ADP + ATP + H(+) = P(1),P(4)-bis(5'-adenosyl) tetraphosphate + phosphate. It carries out the reaction sulfate + ADP + H(+) = adenosine 5'-phosphosulfate + phosphate. In terms of biological role, ap4A phosphorylase catalyzes the phosphorolytic degradation of bis(5'-adenosyl) tetraphosphate (Ap4A) into ADP and ATP. Can also use other Np4N' nucleotides (where N and N' stand for A,C,G or U) as substrates, but prefers A-containing substrates. Cannot catalyze the reverse reaction. Additionally, this enzyme can also catalyze the phosphorolytic degradation of adenosine 5'-phosphosulfate (AMPS) into ADP and sulfate, the reversible exchange reaction between inorganic phosphate and the beta-phosphate of a nucleoside diphosphate (NDP), and the synthesis of Ap4A from AMPS plus ATP. The sequence is that of Diadenosine 5',5'''-P1,P4-tetraphosphate phosphorylase 2 from Saccharomyces cerevisiae (strain ATCC 204508 / S288c) (Baker's yeast).